The sequence spans 164 residues: Respiratory growth induced protein 2 (164 aa).

Belongs to the RGI1 family.

It is found in the cytoplasm. In terms of biological role, involved in the control of energetic metabolism and significantly contribute to cell fitness, especially under respiratory growth conditions. The polypeptide is Respiratory growth induced protein 2 (RGI2) (Saccharomyces cerevisiae (strain JAY291) (Baker's yeast)).